The primary structure comprises 359 residues: 3-dehydroquinate synthase (359 aa).

Residues 71–76 (DGEAYK), 105–109 (GVIGD), 129–130 (TT), lysine 142, and lysine 151 contribute to the NAD(+) site. 3 residues coordinate Zn(2+): glutamate 184, histidine 247, and histidine 264.

This sequence belongs to the sugar phosphate cyclases superfamily. Dehydroquinate synthase family. The cofactor is Co(2+). Zn(2+) is required as a cofactor. It depends on NAD(+) as a cofactor.

It is found in the cytoplasm. It carries out the reaction 7-phospho-2-dehydro-3-deoxy-D-arabino-heptonate = 3-dehydroquinate + phosphate. It functions in the pathway metabolic intermediate biosynthesis; chorismate biosynthesis; chorismate from D-erythrose 4-phosphate and phosphoenolpyruvate: step 2/7. Catalyzes the conversion of 3-deoxy-D-arabino-heptulosonate 7-phosphate (DAHP) to dehydroquinate (DHQ). In Burkholderia vietnamiensis (strain G4 / LMG 22486) (Burkholderia cepacia (strain R1808)), this protein is 3-dehydroquinate synthase.